A 509-amino-acid chain; its full sequence is Maturase K (509 aa).

Belongs to the intron maturase 2 family. MatK subfamily.

The protein resides in the plastid. It localises to the chloroplast. Its function is as follows. Usually encoded in the trnK tRNA gene intron. Probably assists in splicing its own and other chloroplast group II introns. The sequence is that of Maturase K from Trifolium semipilosum (Kenya clover).